A 681-amino-acid polypeptide reads, in one-letter code: MIDRYKHQQLRIGSVSPQQISAWANKILPNGEIVGEVTKPYTFHYKTNKPEKDGLFCERIFGPIKSGICACGNYRVIGNEKEDPKFCEQCGVEFVDSRIRRYQMGYIKLACPVTHVWYLKRLPSYIASLLDKPLKELEGLVYCDFSFARPIAKKPTFLRLRGSFESEIQSRKYSIPLFFTTQDFDTFRNREISTGAGAIKEQLADPDLRIITDHSLVEWKELGEEGSADGNEWEDRKIGRRKDFLVRRMELAKHFIRTNVEPERMVLCLLPVLPPELRPIIQIDGGKPMSSDINELYRRVIYRNNTLTDPLTTSRSTPGESVMCQEKLVQEAVDTLLDNGIRGQPMRDGHNKVYKSFSDVIEGKEGRFRETLLGKRVDYSGRSVIVVGPSLSLHRCGLPREIAIELFQTFVIRGLIRQHVASNIGIAKSKIREKEPIVWEILQEVMQGHPVLLNRAPTLHRLGIQAFQPILVEGRAICLHPLVRKGFNADFDGDQMAVHVPLSLEAQAEARLLMFSHMNLLSPAIGDPISVPTQDMLIGLYILTIGNRRGICSNRYNPCNRRNYQNETVDYNKYTKEKEPYFCSSYDALGAYRQKRINLDSPLWLRWRLDQRVIASREVPIEVQYESLGTYHEIYGHYLIVRSVKKEILCIYIRTTVGHISFYREIEEAIQGFCRAYLYDT.

The Zn(2+) site is built by Cys69, Cys71, Cys87, and Cys90. Residues Asp490, Asp492, and Asp494 each coordinate Mg(2+).

The protein belongs to the RNA polymerase beta' chain family. RpoC1 subfamily. In terms of assembly, in plastids the minimal PEP RNA polymerase catalytic core is composed of four subunits: alpha, beta, beta', and beta''. When a (nuclear-encoded) sigma factor is associated with the core the holoenzyme is formed, which can initiate transcription. It depends on Mg(2+) as a cofactor. Requires Zn(2+) as cofactor.

It localises to the plastid. It is found in the chloroplast. The enzyme catalyses RNA(n) + a ribonucleoside 5'-triphosphate = RNA(n+1) + diphosphate. In terms of biological role, DNA-dependent RNA polymerase catalyzes the transcription of DNA into RNA using the four ribonucleoside triphosphates as substrates. The polypeptide is DNA-directed RNA polymerase subunit beta' (Liriodendron tulipifera (Tuliptree)).